The sequence spans 378 residues: Signal recognition particle receptor FtsY (378 aa).

Residues 184 to 191 (GVNGTGKT), 266 to 270 (DTAGR), and 330 to 333 (TKLD) contribute to the GTP site.

This sequence belongs to the GTP-binding SRP family. FtsY subfamily. In terms of assembly, part of the signal recognition particle protein translocation system, which is composed of SRP and FtsY. SRP is a ribonucleoprotein composed of Ffh and a 4.5S RNA molecule.

Its subcellular location is the cell membrane. The protein resides in the cytoplasm. The enzyme catalyses GTP + H2O = GDP + phosphate + H(+). Functionally, involved in targeting and insertion of nascent membrane proteins into the cytoplasmic membrane. Acts as a receptor for the complex formed by the signal recognition particle (SRP) and the ribosome-nascent chain (RNC). Interaction with SRP-RNC leads to the transfer of the RNC complex to the Sec translocase for insertion into the membrane, the hydrolysis of GTP by both Ffh and FtsY, and the dissociation of the SRP-FtsY complex into the individual components. This Buchnera aphidicola subsp. Acyrthosiphon pisum (strain APS) (Acyrthosiphon pisum symbiotic bacterium) protein is Signal recognition particle receptor FtsY.